The primary structure comprises 521 residues: 2-isopropylmalate synthase (521 aa).

Positions 12–274 (VIIFDTTLRD…WNKIDTTMLT (263 aa)) constitute a Pyruvate carboxyltransferase domain. Residues Asp-21, His-209, His-211, and Asn-245 each coordinate Mn(2+). The interval 398–521 (KLVSLTVIAG…DMAAPAAAAS (124 aa)) is regulatory domain.

The protein belongs to the alpha-IPM synthase/homocitrate synthase family. LeuA type 1 subfamily. As to quaternary structure, homodimer. Mn(2+) serves as cofactor.

Its subcellular location is the cytoplasm. The catalysed reaction is 3-methyl-2-oxobutanoate + acetyl-CoA + H2O = (2S)-2-isopropylmalate + CoA + H(+). Its pathway is amino-acid biosynthesis; L-leucine biosynthesis; L-leucine from 3-methyl-2-oxobutanoate: step 1/4. Functionally, catalyzes the condensation of the acetyl group of acetyl-CoA with 3-methyl-2-oxobutanoate (2-ketoisovalerate) to form 3-carboxy-3-hydroxy-4-methylpentanoate (2-isopropylmalate). This is 2-isopropylmalate synthase from Rhodopseudomonas palustris (strain BisA53).